The following is a 162-amino-acid chain: NADH-quinone oxidoreductase subunit I (162 aa).

4Fe-4S ferredoxin-type domains lie at 53 to 83 (LRRY…IESD) and 93 to 122 (TRYD…ETHI). [4Fe-4S] cluster is bound by residues C63, C66, C69, C73, C102, C105, C108, and C112.

The protein belongs to the complex I 23 kDa subunit family. NDH-1 is composed of 14 different subunits. Subunits NuoA, H, J, K, L, M, N constitute the membrane sector of the complex. It depends on [4Fe-4S] cluster as a cofactor.

It is found in the cell inner membrane. The catalysed reaction is a quinone + NADH + 5 H(+)(in) = a quinol + NAD(+) + 4 H(+)(out). Its function is as follows. NDH-1 shuttles electrons from NADH, via FMN and iron-sulfur (Fe-S) centers, to quinones in the respiratory chain. The immediate electron acceptor for the enzyme in this species is believed to be ubiquinone. Couples the redox reaction to proton translocation (for every two electrons transferred, four hydrogen ions are translocated across the cytoplasmic membrane), and thus conserves the redox energy in a proton gradient. This chain is NADH-quinone oxidoreductase subunit I, found in Bordetella avium (strain 197N).